Reading from the N-terminus, the 623-residue chain is Transketolase (623 aa).

Met1 is subject to N-acetylmethionine. Lys6 and Lys11 each carry N6-acetyllysine. His37 is a binding site for substrate. Thiamine diphosphate contacts are provided by Ser40 and His77. Ser104 carries the post-translational modification Phosphoserine. 123 to 125 (GSL) provides a ligand contact to thiamine diphosphate. An N6-acetyllysine modification is found at Lys144. Asp155 is a binding site for Mg(2+). Residues Gly156 and Asn185 each contribute to the thiamine diphosphate site. Asn185 and Leu187 together coordinate Mg(2+). Residues Lys204, Lys232, and Lys241 each carry the N6-acetyllysine modification. Residues Lys244 and His258 each coordinate thiamine diphosphate. His258 provides a ligand contact to substrate. Lys260 bears the N6-acetyllysine mark. Tyr275 bears the Phosphotyrosine mark. Thr287 is modified (phosphothreonine). Ser295 is modified (phosphoserine). Positions 318 and 345 each coordinate substrate. Residue Ser345 is modified to Phosphoserine. A Glycyl lysine isopeptide (Lys-Gly) (interchain with G-Cter in SUMO2) cross-link involves residue Lys352. The active-site Proton donor is Glu366. A thiamine diphosphate-binding site is contributed by Phe392. Residues His416 and Asp424 each coordinate substrate. Position 428 (Gln428) interacts with thiamine diphosphate. Arg474 serves as a coordination point for substrate. Residues Lys538 and Lys603 each carry the N6-acetyllysine modification.

It belongs to the transketolase family. In terms of assembly, homodimer. Mg(2+) serves as cofactor. It depends on Ca(2+) as a cofactor. Requires Mn(2+) as cofactor. Co(2+) is required as a cofactor. The cofactor is thiamine diphosphate.

The catalysed reaction is D-sedoheptulose 7-phosphate + D-glyceraldehyde 3-phosphate = aldehydo-D-ribose 5-phosphate + D-xylulose 5-phosphate. Catalyzes the transfer of a two-carbon ketol group from a ketose donor to an aldose acceptor, via a covalent intermediate with the cofactor thiamine pyrophosphate. In Mus musculus (Mouse), this protein is Transketolase (Tkt).